The following is a 433-amino-acid chain: Glutamate-1-semialdehyde 2,1-aminomutase (433 aa).

Lys-273 bears the N6-(pyridoxal phosphate)lysine mark.

The protein belongs to the class-III pyridoxal-phosphate-dependent aminotransferase family. HemL subfamily. Homodimer. The cofactor is pyridoxal 5'-phosphate.

The protein localises to the cytoplasm. The catalysed reaction is (S)-4-amino-5-oxopentanoate = 5-aminolevulinate. Its pathway is porphyrin-containing compound metabolism; protoporphyrin-IX biosynthesis; 5-aminolevulinate from L-glutamyl-tRNA(Glu): step 2/2. The protein is Glutamate-1-semialdehyde 2,1-aminomutase of Ralstonia nicotianae (strain ATCC BAA-1114 / GMI1000) (Ralstonia solanacearum).